A 34-amino-acid chain; its full sequence is MSDIN-like toxin proprotein 7 (34 aa).

A propeptide spanning residues 1 to 10 is cleaved from the precursor; the sequence is MSDINATRLP. A cross-link (cyclopeptide (Ala-Pro)) is located at residues 11–17; sequence AWLTDCP. A propeptide spanning residues 18–34 is cleaved from the precursor; the sequence is CVGDDVNRLLTRGESLC.

This sequence belongs to the MSDIN fungal toxin family. Processed by the macrocyclase-peptidase enzyme POPB to yield a toxic cyclic heptapeptide. POPB first removes 10 residues from the N-terminus. Conformational trapping of the remaining peptide forces the enzyme to release this intermediate rather than proceed to macrocyclization. The enzyme rebinds the remaining peptide in a different conformation and catalyzes macrocyclization of the N-terminal 7 residues. In terms of tissue distribution, expressed in basidiocarps.

In terms of biological role, probable toxin that belongs to the MSDIN-like toxin family responsible for a large number of food poisoning cases and deaths. The polypeptide is MSDIN-like toxin proprotein 7 (Amanita exitialis (Guangzhou destroying angel)).